A 229-amino-acid chain; its full sequence is Response regulator SaeR (229 aa).

One can recognise a Response regulatory domain in the interval 3 to 116; that stretch reads HLLIVDDEKD…ELVLRTNNLL (114 aa). A 4-aspartylphosphate modification is found at aspartate 51. The segment at residues 128–227 is a DNA-binding region (ompR/PhoB-type); it reads IEQLEFDGLV…VWGLGYKFER (100 aa).

Phosphorylated by SaeS.

The protein localises to the cytoplasm. Its function is as follows. Member of the two-component regulatory system SaeR/SaeS. Probably functions as a transcriptional regulator via a specific DNA-binding domain, recognizing motifs near the promoter sequences of target genes. The protein is Response regulator SaeR (saeR) of Staphylococcus epidermidis (strain ATCC 35984 / DSM 28319 / BCRC 17069 / CCUG 31568 / BM 3577 / RP62A).